A 152-amino-acid chain; its full sequence is Large ribosomal subunit protein bL9 (152 aa).

This sequence belongs to the bacterial ribosomal protein bL9 family.

Its function is as follows. Binds to the 23S rRNA. This chain is Large ribosomal subunit protein bL9, found in Prochlorococcus marinus (strain NATL2A).